Consider the following 301-residue polypeptide: Porphobilinogen deaminase (301 aa).

At Cys242 the chain carries S-(dipyrrolylmethanemethyl)cysteine.

This sequence belongs to the HMBS family. As to quaternary structure, monomer. Dipyrromethane serves as cofactor.

It catalyses the reaction 4 porphobilinogen + H2O = hydroxymethylbilane + 4 NH4(+). It participates in porphyrin-containing compound metabolism; protoporphyrin-IX biosynthesis; coproporphyrinogen-III from 5-aminolevulinate: step 2/4. Functionally, tetrapolymerization of the monopyrrole PBG into the hydroxymethylbilane pre-uroporphyrinogen in several discrete steps. This chain is Porphobilinogen deaminase, found in Rickettsia canadensis (strain McKiel).